The sequence spans 342 residues: Isopentenyl-diphosphate delta-isomerase (342 aa).

11-12 is a substrate binding site; that stretch reads RK. Residues serine 68, 69 to 71, serine 99, and asparagine 127 contribute to the FMN site; that span reads SMT. 99 to 101 is a binding site for substrate; that stretch reads SMR. Residue glutamine 162 coordinates substrate. Position 163 (glutamate 163) interacts with Mg(2+). FMN-binding positions include lysine 194, threonine 224, 274–276, and 295–296; these read GLK and AG.

It belongs to the IPP isomerase type 2 family. As to quaternary structure, homooctamer. Dimer of tetramers. It depends on FMN as a cofactor. NADPH is required as a cofactor. The cofactor is Mg(2+).

Its subcellular location is the cytoplasm. It catalyses the reaction isopentenyl diphosphate = dimethylallyl diphosphate. Involved in the biosynthesis of isoprenoids. Catalyzes the 1,3-allylic rearrangement of the homoallylic substrate isopentenyl (IPP) to its allylic isomer, dimethylallyl diphosphate (DMAPP). This is Isopentenyl-diphosphate delta-isomerase from Rickettsia peacockii (strain Rustic).